A 167-amino-acid polypeptide reads, in one-letter code: Translationally-controlled tumor protein homolog (167 aa).

In terms of domain architecture, TCTP spans 1-167 (MKLFTDIISN…WKDGLRETKI (167 aa)).

This sequence belongs to the TCTP family.

The protein resides in the cytoplasm. Its subcellular location is the cytoskeleton. Its function is as follows. Involved in protein synthesis. Involved in microtubule stabilization. The sequence is that of Translationally-controlled tumor protein homolog from Mycosarcoma maydis (Corn smut fungus).